The following is a 180-amino-acid chain: UPF0227 protein YE1706 (180 aa).

It belongs to the UPF0227 family.

The polypeptide is UPF0227 protein YE1706 (Yersinia enterocolitica serotype O:8 / biotype 1B (strain NCTC 13174 / 8081)).